A 139-amino-acid chain; its full sequence is Ribonuclease P protein component (139 aa).

Belongs to the RnpA family. In terms of assembly, consists of a catalytic RNA component (M1 or rnpB) and a protein subunit.

The enzyme catalyses Endonucleolytic cleavage of RNA, removing 5'-extranucleotides from tRNA precursor.. In terms of biological role, RNaseP catalyzes the removal of the 5'-leader sequence from pre-tRNA to produce the mature 5'-terminus. It can also cleave other RNA substrates such as 4.5S RNA. The protein component plays an auxiliary but essential role in vivo by binding to the 5'-leader sequence and broadening the substrate specificity of the ribozyme. This is Ribonuclease P protein component from Paraburkholderia xenovorans (strain LB400).